Reading from the N-terminus, the 999-residue chain is Golgin subfamily A member 2 (999 aa).

Positions 1 to 11 are enriched in pro residues; that stretch reads MWPPRFPPPRP. Disordered stretches follow at residues 1 to 80 and 244 to 288; these read MWPP…PAPP and ARQK…YNKD. The segment at 1–86 is interaction with p115/USO1; sequence MWPPRFPPPR…PAPPTAATDT (86 aa). 2 positions are modified to dimethylated arginine: R18 and R30. The Nuclear localization signal signature appears at 26–49; the sequence is KKKLREYQQKNSPGVPAGAKKKKK. Phosphoserine is present on residues S37, S66, S273, and S438. Positions 147-895 form a coiled coil; the sequence is LTSSNMKELE…VLRLVNERNE (749 aa). A compositionally biased stretch (polar residues) spans 271-280; the sequence is TLSTVSTQQK. Residues 444-468 are disordered; it reads SQMEEPPPPEPPAGPSEAEEQLQGE. The span at 448-457 shows a compositional bias: pro residues; that stretch reads EPPPPEPPAG. S697, S934, and S978 each carry phosphoserine. The interaction with GORASP1/GRASP65 stretch occupies residues 989–999; sequence DENDEVKIMVV.

Belongs to the GOLGA2 family. As to quaternary structure, homodimer, may assemble into homohexamers. Homotetramer; forms a parallel homotetramer with a flexible rod-like structure that can give rise to I- and Y-shaped conformations. Interacts with GORASP1/GRASP65. The homooligomer forms a complex with GORASP1 with a 1:1 stoichiometry. Interacts with RAB1B that has been activated by GTP-binding. Interacts with p115/USO1; interaction with p115/USO1 inhibits interaction with STX5 and/or RAB1B. Interacts with STX5. Interacts with ZFPL1. Interacts with AKAP450/AKAP9; leading to recruit AKAP450/AKAP9 to the cis-Golgi. Post-translationally, phosphorylated at Ser-37 by CDK1 at the onset of mitosis, inhibiting the interaction with p115/USO1 and triggering Golgi disassembly. A report however suggests that Golgi disassembly is independent of phosphorylation at Ser-37. Phosphorylated at Ser-37 in prophase as the Golgi complex starts to break down, and remains phosphorylated during further breakdown and partitioning of the Golgi fragments in metaphase and anaphase. In telophase, GM130 is dephosphorylated by PP2A as the Golgi fragments start to reassemble. In terms of processing, cleaved by caspases at the onset of apoptosis. Methylation by PRMT5 is required for Golgi ribbon formation. As to expression, widely expressed. Detected in brain, kidney, lung, liver, spleen, heart, skeletal muscle, thymus and pancreas. Detected in spermatocytes. Present in oocytes during all oocyte meiotic maturation (at protein level).

It localises to the golgi apparatus. It is found in the cis-Golgi network membrane. The protein resides in the endoplasmic reticulum-Golgi intermediate compartment membrane. Its subcellular location is the cytoplasm. The protein localises to the cytoskeleton. It localises to the spindle pole. Peripheral membrane component of the cis-Golgi stack that acts as a membrane skeleton that maintains the structure of the Golgi apparatus, and as a vesicle thether that facilitates vesicle fusion to the Golgi membrane. Required for normal protein transport from the endoplasmic reticulum to the Golgi apparatus and the cell membrane. Together with p115/USO1 and STX5, involved in vesicle tethering and fusion at the cis-Golgi membrane to maintain the stacked and inter-connected structure of the Golgi apparatus. Plays a central role in mitotic Golgi disassembly: phosphorylation at Ser-37 by CDK1 at the onset of mitosis inhibits the interaction with p115/USO1, preventing tethering of COPI vesicles and thereby inhibiting transport through the Golgi apparatus during mitosis. Also plays a key role in spindle pole assembly and centrosome organization. Promotes the mitotic spindle pole assembly by activating the spindle assembly factor TPX2 to nucleate microtubules around the Golgi and capture them to couple mitotic membranes to the spindle: upon phosphorylation at the onset of mitosis, GOLGA2 interacts with importin-alpha via the nuclear localization signal region, leading to recruit importin-alpha to the Golgi membranes and liberate the spindle assembly factor TPX2 from importin-alpha. TPX2 then activates AURKA kinase and stimulates local microtubule nucleation. Upon filament assembly, nascent microtubules are further captured by GOLGA2, thus linking Golgi membranes to the spindle. Regulates the meiotic spindle pole assembly, probably via the same mechanism. Also regulates the centrosome organization. Also required for the Golgi ribbon formation and glycosylation of membrane and secretory proteins. This chain is Golgin subfamily A member 2 (Golga2), found in Mus musculus (Mouse).